A 158-amino-acid chain; its full sequence is NAD(P)H-quinone oxidoreductase subunit J, chloroplastic (158 aa).

It belongs to the complex I 30 kDa subunit family. In terms of assembly, NDH is composed of at least 16 different subunits, 5 of which are encoded in the nucleus.

The protein resides in the plastid. It localises to the chloroplast thylakoid membrane. It carries out the reaction a plastoquinone + NADH + (n+1) H(+)(in) = a plastoquinol + NAD(+) + n H(+)(out). It catalyses the reaction a plastoquinone + NADPH + (n+1) H(+)(in) = a plastoquinol + NADP(+) + n H(+)(out). Functionally, NDH shuttles electrons from NAD(P)H:plastoquinone, via FMN and iron-sulfur (Fe-S) centers, to quinones in the photosynthetic chain and possibly in a chloroplast respiratory chain. The immediate electron acceptor for the enzyme in this species is believed to be plastoquinone. Couples the redox reaction to proton translocation, and thus conserves the redox energy in a proton gradient. In Solanum bulbocastanum (Wild potato), this protein is NAD(P)H-quinone oxidoreductase subunit J, chloroplastic.